Reading from the N-terminus, the 612-residue chain is Dihydroxy-acid dehydratase (612 aa).

Aspartate 81 contributes to the Mg(2+) binding site. Cysteine 122 serves as a coordination point for [2Fe-2S] cluster. Residues aspartate 123 and lysine 124 each coordinate Mg(2+). Residue lysine 124 is modified to N6-carboxylysine. Cysteine 195 is a binding site for [2Fe-2S] cluster. Residue glutamate 491 coordinates Mg(2+). The Proton acceptor role is filled by serine 517.

The protein belongs to the IlvD/Edd family. Homodimer. [2Fe-2S] cluster is required as a cofactor. The cofactor is Mg(2+).

The enzyme catalyses (2R)-2,3-dihydroxy-3-methylbutanoate = 3-methyl-2-oxobutanoate + H2O. The catalysed reaction is (2R,3R)-2,3-dihydroxy-3-methylpentanoate = (S)-3-methyl-2-oxopentanoate + H2O. It functions in the pathway amino-acid biosynthesis; L-isoleucine biosynthesis; L-isoleucine from 2-oxobutanoate: step 3/4. Its pathway is amino-acid biosynthesis; L-valine biosynthesis; L-valine from pyruvate: step 3/4. Functionally, functions in the biosynthesis of branched-chain amino acids. Catalyzes the dehydration of (2R,3R)-2,3-dihydroxy-3-methylpentanoate (2,3-dihydroxy-3-methylvalerate) into 2-oxo-3-methylpentanoate (2-oxo-3-methylvalerate) and of (2R)-2,3-dihydroxy-3-methylbutanoate (2,3-dihydroxyisovalerate) into 2-oxo-3-methylbutanoate (2-oxoisovalerate), the penultimate precursor to L-isoleucine and L-valine, respectively. The polypeptide is Dihydroxy-acid dehydratase (Buchnera aphidicola subsp. Baizongia pistaciae (strain Bp)).